A 604-amino-acid polypeptide reads, in one-letter code: Solute carrier family 23 member 1 (604 aa).

The segment at 1–29 (MKAQEDPGSSKQHECPDSAGTSTRDQQAP) is disordered. Topologically, residues 1-59 (MKAQEDPGSSKQHECPDSAGTSTRDQQAPLPAEPKFDMLYKIEDVPPWYLCILLGFQHY) are cytoplasmic. The chain crosses the membrane as a helical span at residues 60–80 (LTCFSGTIAVPFLLAEALCVG). Over 81–88 (RDQHMISQ) the chain is Extracellular. The chain crosses the membrane as a helical span at residues 89 to 109 (LIGTIFTCVGITTLIQTTVGI). Position 110 (arginine 110) is a topological domain, cytoplasmic. Residues 111–131 (LPLFQASAFAFLVPAKAILAL) traverse the membrane as a helical segment. Residues 132-166 (ERWKCPPEEEIYGNWSMPLNTSHIWHPRIREVQGA) lie on the Extracellular side of the membrane. Residues asparagine 145 and asparagine 151 are each glycosylated (N-linked (GlcNAc...) asparagine). A helical transmembrane segment spans residues 167–187 (IMVSSVVEVVIGLLGLPGALL). Residues 188–214 (SYIGPLTVTPTVSLIGLSVFQAAGDRA) lie on the Cytoplasmic side of the membrane. A helical membrane pass occupies residues 215–232 (GSHWGISACSILLIVLFS). Residues 233-236 (QYLR) lie on the Extracellular side of the membrane. The helical intramembrane region spans 237-250 (NLTFLLPVYRWGKG). Over 251–257 (LTLFRIQ) the chain is Extracellular. Residues 258 to 278 (IFKMFPIVLAIMTVWLLCYVL) traverse the membrane as a helical segment. Residues 279 to 319 (TLTDVLPADPTVYGFQARTDARGDIMAISPWIRIPYPCQWG) lie on the Cytoplasmic side of the membrane. The chain crosses the membrane as a helical span at residues 320-340 (LPTVTVAAVLGMFSATLAGII). Topologically, residues 341 to 365 (ESIGDYYACARLAGAPPPPVHAINR) are extracellular. A helical membrane pass occupies residues 366–386 (GIFTEGVCCIIAGLLGTGNGS). Residues 387–409 (TSSSPNIGVLGITKVGSRRVVQY) are Cytoplasmic-facing. Residues 410-430 (GAGIMLILGAIGKFTALFASL) traverse the membrane as a helical segment. Residues 431-433 (PDP) lie on the Extracellular side of the membrane. Residues 434–454 (ILGGMFCTLFGMITAVGLSNL) traverse the membrane as a helical segment. The Cytoplasmic segment spans residues 455–464 (QFVDMNSSRN). The chain crosses the membrane as a helical span at residues 465–485 (LFVLGFSMFFGLTLPNYLDSN). At 486–497 (PGAINTGVPEVD) the chain is on the extracellular side. A helical transmembrane segment spans residues 498-518 (QILTVLLTTEMFVGGCLAFIL). Residues 519-604 (DNTVPGSPEE…TETGSVCTKV (86 aa)) lie on the Cytoplasmic side of the membrane. Threonine 597 bears the Phosphothreonine mark. Serine 599 carries the phosphoserine modification. A Phosphothreonine modification is found at threonine 602.

The protein belongs to the nucleobase:cation symporter-2 (NCS2) (TC 2.A.40) family. Phosphorylated. In terms of tissue distribution, highly expressed in the straight segment of proximal tubules in the kidney, in intestine and liver. Detected in epithelial cells of the bronchiole and epididymis.

The protein resides in the cell membrane. It catalyses the reaction L-ascorbate(out) + 2 Na(+)(out) = L-ascorbate(in) + 2 Na(+)(in). The enzyme catalyses urate(out) + 2 Na(+)(out) = urate(in) + 2 Na(+)(in). Its function is as follows. Sodium/ascorbate cotransporter. Mediates electrogenic uptake of vitamin C, with a stoichiometry of 2 Na(+) for each ascorbate. Has retained some ancestral activity toward nucleobases such as urate, an oxidized purine. Low-affinity high-capacity sodium:urate cotransporter, may regulate serum urate levels by serving as a renal urate re-absorber. This is Solute carrier family 23 member 1 (Slc23a1) from Rattus norvegicus (Rat).